The chain runs to 437 residues: MKVYIETMGCAMNSRDSEHLLSELSKLDYKETSDPKMADLILINTCSVREKPERKLFSEIGQFAKIKKPNAKIGVCGCTASHMGADILKKAPSVSFVLGARNVSKISQVIHKEKAVEVAIDYDESAYAFEFFEKKAQIRSLLNISIGCDKKCAYCIVPHTRGKEISIPMDLILKEAEKLANNGTKELMLLGQNVNNYGVRFSSEHAKVDFSDLLDKLSEIPGIERIRFTSPHPLHMNDGFLERFAKNPKVCKSIHMPLQSGSSAVLKMMRRGYSKEWFLNRVERLKALVPEVGISTDIIVGFPNESDKDFEDTMEVLEKVRFDTLYSFIYSPRPFTEAGAWKERVPLEVSSSRLERLQNRHKEILEEKAKLEVGKTHVVLVENRREMDNQIVGFEGRSDTGKFIEVTCKEKRNPGELVKVEIISHSKGRLIAAIKGN.

The 115-residue stretch at 1-115 (MKVYIETMGC…ISQVIHKEKA (115 aa)) folds into the MTTase N-terminal domain. The [4Fe-4S] cluster site is built by Cys10, Cys46, Cys78, Cys148, Cys152, and Cys155. The Radical SAM core domain occupies 134 to 367 (KKAQIRSLLN…QNRHKEILEE (234 aa)). Residues 370-436 (KLEVGKTHVV…KGRLIAAIKG (67 aa)) form the TRAM domain.

It belongs to the methylthiotransferase family. MiaB subfamily. In terms of assembly, monomer. [4Fe-4S] cluster is required as a cofactor.

The protein localises to the cytoplasm. The catalysed reaction is N(6)-dimethylallyladenosine(37) in tRNA + (sulfur carrier)-SH + AH2 + 2 S-adenosyl-L-methionine = 2-methylsulfanyl-N(6)-dimethylallyladenosine(37) in tRNA + (sulfur carrier)-H + 5'-deoxyadenosine + L-methionine + A + S-adenosyl-L-homocysteine + 2 H(+). Functionally, catalyzes the methylthiolation of N6-(dimethylallyl)adenosine (i(6)A), leading to the formation of 2-methylthio-N6-(dimethylallyl)adenosine (ms(2)i(6)A) at position 37 in tRNAs that read codons beginning with uridine. The chain is tRNA-2-methylthio-N(6)-dimethylallyladenosine synthase from Helicobacter pylori (strain P12).